A 259-amino-acid chain; its full sequence is Type III pantothenate kinase (259 aa).

6 to 13 is a binding site for ATP; it reads DVGNTNIV. Substrate-binding positions include Tyr100 and 107–110; that span reads GADR. The active-site Proton acceptor is Asp109. Residue Asp129 coordinates K(+). Thr132 lines the ATP pocket. Thr184 is a binding site for substrate.

It belongs to the type III pantothenate kinase family. As to quaternary structure, homodimer. The cofactor is NH4(+). K(+) serves as cofactor.

It is found in the cytoplasm. It catalyses the reaction (R)-pantothenate + ATP = (R)-4'-phosphopantothenate + ADP + H(+). Its pathway is cofactor biosynthesis; coenzyme A biosynthesis; CoA from (R)-pantothenate: step 1/5. Its function is as follows. Catalyzes the phosphorylation of pantothenate (Pan), the first step in CoA biosynthesis. The sequence is that of Type III pantothenate kinase from Clostridium perfringens (strain 13 / Type A).